The following is a 297-amino-acid chain: Proline iminopeptidase (297 aa).

The 106-residue stretch at 26–131 (VLLLHGGPAM…GLLVSNMMAS (106 aa)) folds into the AB hydrolase-1 domain. The Nucleophile role is filled by Ser103. Asp243 is an active-site residue. His270 (proton donor) is an active-site residue.

Belongs to the peptidase S33 family. In terms of assembly, monomer.

The enzyme catalyses Release of N-terminal proline from a peptide.. Functionally, releases the N-terminal proline from various substrates. The sequence is that of Proline iminopeptidase (fpaP) from Flavobacterium johnsoniae (strain ATCC 17061 / DSM 2064 / JCM 8514 / BCRC 14874 / CCUG 350202 / NBRC 14942 / NCIMB 11054 / UW101) (Cytophaga johnsonae).